A 414-amino-acid polypeptide reads, in one-letter code: Imidazolonepropionase (414 aa).

A compositionally biased stretch (polar residues) spans 1–20 (MSHQLFRNTRIYSPMDSGQP). The interval 1-26 (MSHQLFRNTRIYSPMDSGQPSAGKAQ) is disordered. Positions 81 and 83 each coordinate Fe(3+). Positions 81 and 83 each coordinate Zn(2+). Positions 90, 153, and 186 each coordinate 4-imidazolone-5-propanoate. Position 153 (Tyr-153) interacts with N-formimidoyl-L-glutamate. His-251 serves as a coordination point for Fe(3+). Position 251 (His-251) interacts with Zn(2+). Glu-254 is a 4-imidazolone-5-propanoate binding site. Asp-325 lines the Fe(3+) pocket. Asp-325 is a binding site for Zn(2+). 2 residues coordinate N-formimidoyl-L-glutamate: Asn-327 and Gly-329. Residue Ser-330 participates in 4-imidazolone-5-propanoate binding.

Belongs to the metallo-dependent hydrolases superfamily. HutI family. Requires Zn(2+) as cofactor. Fe(3+) is required as a cofactor.

The protein localises to the cytoplasm. The enzyme catalyses 4-imidazolone-5-propanoate + H2O = N-formimidoyl-L-glutamate. It participates in amino-acid degradation; L-histidine degradation into L-glutamate; N-formimidoyl-L-glutamate from L-histidine: step 3/3. Its function is as follows. Catalyzes the hydrolytic cleavage of the carbon-nitrogen bond in imidazolone-5-propanoate to yield N-formimidoyl-L-glutamate. It is the third step in the universal histidine degradation pathway. The sequence is that of Imidazolonepropionase from Desulfotalea psychrophila (strain LSv54 / DSM 12343).